Consider the following 424-residue polypeptide: Serine--tRNA ligase (424 aa).

Residue 231-233 participates in L-serine binding; it reads TAE. 262 to 264 provides a ligand contact to ATP; that stretch reads RSE. Glu-285 contacts L-serine. An ATP-binding site is contributed by 349–352; it reads EISS. Ser-385 contacts L-serine.

This sequence belongs to the class-II aminoacyl-tRNA synthetase family. Type-1 seryl-tRNA synthetase subfamily. As to quaternary structure, homodimer. The tRNA molecule binds across the dimer.

It localises to the cytoplasm. It catalyses the reaction tRNA(Ser) + L-serine + ATP = L-seryl-tRNA(Ser) + AMP + diphosphate + H(+). The enzyme catalyses tRNA(Sec) + L-serine + ATP = L-seryl-tRNA(Sec) + AMP + diphosphate + H(+). Its pathway is aminoacyl-tRNA biosynthesis; selenocysteinyl-tRNA(Sec) biosynthesis; L-seryl-tRNA(Sec) from L-serine and tRNA(Sec): step 1/1. Functionally, catalyzes the attachment of serine to tRNA(Ser). Is also able to aminoacylate tRNA(Sec) with serine, to form the misacylated tRNA L-seryl-tRNA(Sec), which will be further converted into selenocysteinyl-tRNA(Sec). In Bacillus cereus (strain G9842), this protein is Serine--tRNA ligase.